The chain runs to 334 residues: Sterol 4-C-methyltransferase strm-1 (334 aa).

The protein belongs to the class I-like SAM-binding methyltransferase superfamily. Erg6/SMT family. As to expression, expressed in the pharynx and hypodermal syncytium.

It carries out the reaction 5alpha-cholest-7-en-3-one + S-adenosyl-L-methionine = 4alpha-methyl-5alpha-cholest-7-en-3-one + S-adenosyl-L-homocysteine + H(+). It functions in the pathway steroid hormone biosynthesis; dafachronic acid biosynthesis. Functionally, catalyzes the methyl transfer from S-adenosyl-methionine to the C-4 of the A-ring sterols such as lathosterone (5alpha-cholest-7-en-3-one) thereby rendering them unsuitable as ligand precursors. May irreversibly shunt sterols away from hormone dafachronic acid production. Dafachronic acids act as ligands and bind directly to the nuclear hormone receptor (NHR) daf-12 suppressing dauer formation and inducing reproductive growth. By reducing the biosynthesis of dafachronic acids, this methyltransferase can regulate dauer larva formation. In Caenorhabditis elegans, this protein is Sterol 4-C-methyltransferase strm-1 (strm-1).